Consider the following 333-residue polypeptide: Holliday junction branch migration complex subunit RuvB (333 aa).

Residues 1 to 181 are large ATPase domain (RuvB-L); sequence MNDILNKEPM…FGISSHMEYY (181 aa). Residues Leu20, Arg21, Gly62, Lys65, Thr66, Thr67, 128–130, Arg171, Tyr181, and Arg218 each bind ATP; that span reads EDF. Residue Thr66 participates in Mg(2+) binding. The tract at residues 182-252 is small ATPAse domain (RuvB-S); that stretch reads QERDLEEIVK…ITDKALSILD (71 aa). A head domain (RuvB-H) region spans residues 255–333; it reads AAGLDYIDQK…HLGYVYNEED (79 aa). DNA is bound by residues Arg291, Arg310, and Arg315.

It belongs to the RuvB family. In terms of assembly, homohexamer. Forms an RuvA(8)-RuvB(12)-Holliday junction (HJ) complex. HJ DNA is sandwiched between 2 RuvA tetramers; dsDNA enters through RuvA and exits via RuvB. An RuvB hexamer assembles on each DNA strand where it exits the tetramer. Each RuvB hexamer is contacted by two RuvA subunits (via domain III) on 2 adjacent RuvB subunits; this complex drives branch migration. In the full resolvosome a probable DNA-RuvA(4)-RuvB(12)-RuvC(2) complex forms which resolves the HJ.

Its subcellular location is the cytoplasm. The enzyme catalyses ATP + H2O = ADP + phosphate + H(+). Functionally, the RuvA-RuvB-RuvC complex processes Holliday junction (HJ) DNA during genetic recombination and DNA repair, while the RuvA-RuvB complex plays an important role in the rescue of blocked DNA replication forks via replication fork reversal (RFR). RuvA specifically binds to HJ cruciform DNA, conferring on it an open structure. The RuvB hexamer acts as an ATP-dependent pump, pulling dsDNA into and through the RuvAB complex. RuvB forms 2 homohexamers on either side of HJ DNA bound by 1 or 2 RuvA tetramers; 4 subunits per hexamer contact DNA at a time. Coordinated motions by a converter formed by DNA-disengaged RuvB subunits stimulates ATP hydrolysis and nucleotide exchange. Immobilization of the converter enables RuvB to convert the ATP-contained energy into a lever motion, pulling 2 nucleotides of DNA out of the RuvA tetramer per ATP hydrolyzed, thus driving DNA branch migration. The RuvB motors rotate together with the DNA substrate, which together with the progressing nucleotide cycle form the mechanistic basis for DNA recombination by continuous HJ branch migration. Branch migration allows RuvC to scan DNA until it finds its consensus sequence, where it cleaves and resolves cruciform DNA. The chain is Holliday junction branch migration complex subunit RuvB from Lactococcus lactis subsp. lactis (strain IL1403) (Streptococcus lactis).